Here is a 594-residue protein sequence, read N- to C-terminus: Pre-mRNA-processing protein 45 (594 aa).

Disordered regions lie at residues threonine 36 to tryptophan 63, proline 223 to aspartate 254, glutamate 370 to arginine 426, alanine 498 to arginine 523, and glutamate 566 to glutamate 594. Composition is skewed to pro residues over residues alanine 44–glutamine 53 and proline 235–glutamine 244. Positions glycine 383–alanine 397 are enriched in acidic residues. Composition is skewed to basic and acidic residues over residues isoleucine 398–arginine 417, glutamate 513–arginine 523, and arginine 578–glutamate 594.

The protein belongs to the SNW family. In terms of assembly, associated with the spliceosome.

The protein localises to the nucleus. Functionally, involved in pre-mRNA splicing. This is Pre-mRNA-processing protein 45 (PRP45) from Cryptococcus neoformans var. neoformans serotype D (strain B-3501A) (Filobasidiella neoformans).